The sequence spans 1045 residues: Translation initiation factor IF-2 (1045 aa).

2 disordered regions span residues 1–169 and 184–451; these read MSDE…AQAP and QAPA…RGGP. Residues 83-94 show a composition bias toward gly residues; sequence SGGGGSSAGGLS. Over residues 103–123 the composition is skewed to basic and acidic residues; sequence RAIEAAREHQERQAAERRAAE. The span at 124–151 shows a compositional bias: low complexity; that stretch reads ARAASEAAAARDAAAKSAAAAKAAAAPA. The span at 152–163 shows a compositional bias: pro residues; the sequence is PEAPAAPAPTPA. Residues 184 to 199 are compositionally biased toward low complexity; it reads QAPAAPVAAAPAAPRA. Composition is skewed to basic and acidic residues over residues 227 to 237 and 302 to 323; these read EPSRDRRDDRS and RNDRPQGDRPQGDRPQGDRPQG. Positions 338-348 are enriched in pro residues; that stretch reads RPAPGARPGPG. Low complexity predominate over residues 352–363; it reads GARPGVPASAPA. Basic and acidic residues-rich tracts occupy residues 381–393 and 438–450; these read VGRKPEEDDDRRK and RAREREKEKRRGG. The tr-type G domain maps to 540-710; the sequence is PRPPVVTVMG…LLLAEVMDLK (171 aa). The tract at residues 549-556 is G1; sequence GHVDHGKT. 549–556 contributes to the GTP binding site; that stretch reads GHVDHGKT. Positions 574 to 578 are G2; the sequence is GITQH. Residues 596 to 599 form a G3 region; that stretch reads DTPG. Residues 596 to 600 and 650 to 653 contribute to the GTP site; these read DTPGH and NKMD. Residues 650–653 form a G4 region; it reads NKMD. The G5 stretch occupies residues 686 to 688; it reads SAK.

Belongs to the TRAFAC class translation factor GTPase superfamily. Classic translation factor GTPase family. IF-2 subfamily.

The protein resides in the cytoplasm. Functionally, one of the essential components for the initiation of protein synthesis. Protects formylmethionyl-tRNA from spontaneous hydrolysis and promotes its binding to the 30S ribosomal subunits. Also involved in the hydrolysis of GTP during the formation of the 70S ribosomal complex. The polypeptide is Translation initiation factor IF-2 (Caulobacter sp. (strain K31)).